A 252-amino-acid polypeptide reads, in one-letter code: Transcriptional regulatory protein HptR (252 aa).

The Response regulatory domain maps to 3–118; that stretch reads KVVICDDERI…QLEVILGRLV (116 aa). Position 55 is a 4-aspartylphosphate (Asp-55). The 98-residue stretch at 153–250 folds into the HTH araC/xylS-type domain; sequence NQIVDQIKQS…QMSPSDYCKQ (98 aa). 2 consecutive DNA-binding regions (H-T-H motif) follow at residues 170-191 and 217-240; these read SDLI…KDHV and HYEI…KKYL.

In terms of processing, phosphorylated by HptS.

The protein resides in the cytoplasm. Member of the two-component regulatory system HptS/HptR that regulates genes involved in hexose phosphate transport system in response to changes in extracellular phosphate sources. Activates uhpT expression to facilitate glucose-6-phosphate/G6P utilization by directly binding to its promoter. Antagonizes CcpA-dependent transcription of a subset of CcpA-regulated genes involved in antibiotic susceptibility. This is Transcriptional regulatory protein HptR (hptR) from Staphylococcus aureus (strain Mu50 / ATCC 700699).